Here is a 137-residue protein sequence, read N- to C-terminus: Glutamate mutase sigma subunit (137 aa).

The B12-binding domain maps to 3–137; sequence KKTIVLGVIG…ADMKEVLGVE (135 aa). Adenosylcob(III)alamin-binding positions include 13 to 17, His-16, 61 to 63, and 93 to 97; these read SDCHA, SSL, and NIVVG.

Belongs to the methylaspartate mutase GlmS subunit family. Heterotetramer composed of 2 epsilon subunits (GlmE) and 2 sigma subunits (GlmS). GlmE exists as a homodimer and GlmS as a monomer. The cofactor is adenosylcob(III)alamin.

It carries out the reaction (2S,3S)-3-methyl-L-aspartate = L-glutamate. It participates in amino-acid degradation; L-glutamate degradation via mesaconate pathway; acetate and pyruvate from L-glutamate: step 1/4. In terms of biological role, catalyzes the carbon skeleton rearrangement of L-glutamate to L-threo-3-methylaspartate ((2S,3S)-3-methylaspartate). In Clostridium tetanomorphum, this protein is Glutamate mutase sigma subunit.